The primary structure comprises 208 residues: FAS-associated death domain protein (208 aa).

Residues 3 to 81 (PFLVLLHSVS…RHDLLRRVDD (79 aa)) enclose the DED domain. The Death domain maps to 97-181 (LCAAFNVICD…LVADLVQEVQ (85 aa)). A glycan ((Microbial infection) N-beta-linked (GlcNAc) arginine) is linked at Arg-117. The disordered stretch occupies residues 187 to 208 (QNRSGAMSPMSWNSDASTSEAS). Residue Ser-194 is modified to Phosphoserine.

Can self-associate. Component of the AIM2 PANoptosome complex, a multiprotein complex that drives inflammatory cell death (PANoptosis). Component of the death-induced signaling complex (DISC) composed of cell surface receptor FAS/CD95 or TNFRSF1A, adapter protein FADD and the CASP8 protease; recruitment of CASP8 to the complex is required for processing of CASP8 into the p18 and p10 subunits. Interacts (via death domain) with FAS (via death domain). Interacts directly (via DED domain) with NOL3 (via CARD domain); inhibits death-inducing signaling complex (DISC) assembly by inhibiting the increase in FAS-FADD binding induced by FAS activation. Interacts with CFLAR, PEA15 and MBD4. When phosphorylated, part of a complex containing HIPK3 and FAS. May interact with MAVS/IPS1. Interacts with MOCV v-CFLAR protein and PIDD1. Interacts with RIPK1 and TRADD. Interacts with stimulated TNFRSF10B. Interacts with DDX24. In terms of assembly, (Microbial infection) Interacts with human papillomavirus 16/HPV16 protein E6. As to quaternary structure, (Microbial infection) Interacts with molluscum contagiosum virus proteins MC159L/v-CFLAR and MC160L. (Microbial infection) Glycosylated at Arg-117 by enteropathogenic E.coli protein NleB1, C.rodentium protein NleB and S.typhimurium protein Ssek1: arginine GlcNAcylation prevents recruitment of caspase-8 or caspase-10 to the activated Fas (CD95) or TNFR-1 receptors. In terms of tissue distribution, expressed in a wide variety of tissues, except for peripheral blood mononuclear leukocytes.

The protein localises to the cytoplasm. Apoptotic adapter molecule that recruits caspases CASP8 or CASP10 to the activated FAS/CD95 or TNFRSF1A/TNFR-1 receptors. The resulting aggregate called the death-inducing signaling complex (DISC) performs CASP8 proteolytic activation. Active CASP8 initiates the subsequent cascade of caspases mediating apoptosis. Involved in interferon-mediated antiviral immune response, playing a role in the positive regulation of interferon signaling. This chain is FAS-associated death domain protein, found in Homo sapiens (Human).